The chain runs to 159 residues: MEKIPSFQLDHIRLKRGIYVSRKDYIGGEVVTTFDIRMKEPNREPVLGAPELHTIEHLAATYLRNHPLYKDRIVFWGPMGCLTGNYFLMRGDYVSKDILPLMQETFRFIRDFEGEVPGTEPRDCGNCLLHNLPMAKYEAEKYLREVLDVATEENLNYPD.

Residues His-53, His-57, and Cys-124 each contribute to the Fe cation site.

Belongs to the LuxS family. As to quaternary structure, homodimer. Fe cation serves as cofactor.

The catalysed reaction is S-(5-deoxy-D-ribos-5-yl)-L-homocysteine = (S)-4,5-dihydroxypentane-2,3-dione + L-homocysteine. Functionally, involved in the synthesis of autoinducer 2 (AI-2) which is secreted by bacteria and is used to communicate both the cell density and the metabolic potential of the environment. The regulation of gene expression in response to changes in cell density is called quorum sensing. Catalyzes the transformation of S-ribosylhomocysteine (RHC) to homocysteine (HC) and 4,5-dihydroxy-2,3-pentadione (DPD). The chain is S-ribosylhomocysteine lyase from Porphyromonas gingivalis (strain ATCC BAA-308 / W83).